We begin with the raw amino-acid sequence, 90 residues long: Large ribosomal subunit protein uL23c (90 aa).

This sequence belongs to the universal ribosomal protein uL23 family. As to quaternary structure, part of the 50S ribosomal subunit.

It localises to the plastid. Its subcellular location is the chloroplast. Functionally, binds to 23S rRNA. This is Large ribosomal subunit protein uL23c (rpl23) from Tetradesmus obliquus (Green alga).